Consider the following 377-residue polypeptide: Apelin receptor (377 aa).

Topologically, residues Met-1 to Leu-28 are extracellular. N-linked (GlcNAc...) asparagine glycosylation is present at Asn-13. 2 disulfide bridges follow: Cys-17/Cys-279 and Cys-100/Cys-179. Residues Ile-29–Phe-52 form a helical membrane-spanning segment. The Cytoplasmic portion of the chain corresponds to Trp-53 to Ala-62. A helical transmembrane segment spans residues Asp-63 to Ala-84. Topologically, residues Thr-85–Thr-97 are extracellular. A helical transmembrane segment spans residues Phe-98–Phe-123. Topologically, residues Asp-124–Gly-144 are cytoplasmic. Residues Ala-145–Val-162 traverse the membrane as a helical segment. At Met-163–Glu-196 the chain is on the extracellular side. A glycan (N-linked (GlcNAc...) asparagine) is linked at Asn-173. Residues Val-197–Phe-221 traverse the membrane as a helical segment. Residues Ile-222–Leu-244 are Cytoplasmic-facing. The chain crosses the membrane as a helical span at residues Leu-245 to Leu-268. At Tyr-269–Asn-287 the chain is on the extracellular side. Residues Val-288 to Phe-310 traverse the membrane as a helical segment. At Asp-311–Asp-377 the chain is on the cytoplasmic side. The span at Ser-335–Ser-349 shows a compositional bias: low complexity. Positions Ser-335–Asp-377 are disordered.

This sequence belongs to the G-protein coupled receptor 1 family. Homodimer; dimerization inhibits APLNR-mediated G protein and beta-arrestin signaling pathways compared to monomeric APLNR. Widely expressed. Highest expression in the lung, lower in the heart, placenta, ovary, skeletal muscle, mammary gland, kidney and several structures in the brain as the hypothalamus (supraoptic and periventricular nuclei), pituitary, olfactory bulb and pineal gland.

The protein localises to the cell membrane. Its function is as follows. G protein-coupled receptor for peptide hormones apelin (APLN) and apelin receptor early endogenous ligand (APELA/ELA), that plays a role in the regulation of normal cardiovascular function and fluid homeostasis. When acting as apelin receptor, activates both G(i) protein pathway that inhibits adenylate cyclase activity, and the beta-arrestin pathway that promotes internalization of the receptor. APLNR/APJ also functions as mechanoreceptor that is activated by pathological stimuli in a G-protein-independent fashion to induce beta-arrestin signaling, hence eliciting cardiac hypertrophy. However, the presence of apelin ligand blunts cardiac hypertrophic induction from APLNR/APJ on response to pathological stimuli. Plays a key role in early development such as gastrulation, blood vessels formation and heart morphogenesis by acting as a APELA receptor. May promote angioblast migration toward the embryonic midline, i.e. the position of the future vessel formation, during vasculogenesis. Promotes sinus venosus (SV)-derived endothelial cells migration into the developing heart to promote coronary blood vessel development. Also plays a role in various processes in adults such as regulation of blood vessel formation, blood pressure, heart contractility and heart failure. This Rattus norvegicus (Rat) protein is Apelin receptor.